Consider the following 531-residue polypeptide: Polygalacturonase (531 aa).

The signal sequence occupies residues Met1–Ala23. Residue Asp307 is the Proton donor of the active site. His333 is an active-site residue. The interval Ala518–Ile531 is required for PGA export across the outer membrane and catalytic activity.

This sequence belongs to the glycosyl hydrolase 28 family. As to quaternary structure, monomer.

The protein resides in the secreted. The catalysed reaction is (1,4-alpha-D-galacturonosyl)n+m + H2O = (1,4-alpha-D-galacturonosyl)n + (1,4-alpha-D-galacturonosyl)m.. Its function is as follows. Contributes to the wilt disease production on tomato. The sequence is that of Polygalacturonase (pglA) from Ralstonia nicotianae (strain ATCC BAA-1114 / GMI1000) (Ralstonia solanacearum).